The chain runs to 844 residues: DNA mismatch repair protein MutS (844 aa).

An ATP-binding site is contributed by 602-609 (GPNMSGKS).

It belongs to the DNA mismatch repair MutS family.

Its function is as follows. This protein is involved in the repair of mismatches in DNA. It is possible that it carries out the mismatch recognition step. This protein has a weak ATPase activity. The polypeptide is DNA mismatch repair protein MutS (Streptococcus pneumoniae (strain ATCC 700669 / Spain 23F-1)).